We begin with the raw amino-acid sequence, 411 residues long: MKRQNVRTLALIVCTFTYLLVGAAVFDALESEPEMIERQRLELRQLELRARYNLSEGGYEELERVVLRLKPHKAGVQWRFAGSFYFAITVITTIGYGHAAPSTDGGKVFCMFYALLGIPLTLVMFQSLGERINTFVRYLLHRAKRGLGMRHAEVSMANMVLIGFVSCISTLCIGAAAFSYYERWTFFQAYYYCFITLTTIGFGDYVALQKDQALQTQPQYVAFSFVYILTGLTVIGAFLNLVVLRFMTMNAEDEKRDAEHRALLTHNGQAGGLGGLSCLSGSLGDGVRPRDPVTCAAAAGGMGVGVGVGGSGFRNVYAEMLHFQSMCSCLWYKSREKLQYSIPMIIPRDLSTSDTCVEHSHSSPGGGGRYSDTPSHPCLCSGTQRSAISSVSTGLHSLATFRGLMKRRSSV.

At 1–8 (MKRQNVRT) the chain is on the cytoplasmic side. A helical transmembrane segment spans residues 9–29 (LALIVCTFTYLLVGAAVFDAL). Asn53 carries N-linked (GlcNAc...) asparagine glycosylation. The pore-forming intramembrane region spans 78 to 101 (WRFAGSFYFAITVITTIGYGHAAP). The chain crosses the membrane as a helical span at residues 108–128 (VFCMFYALLGIPLTLVMFQSL). At 129-158 (GERINTFVRYLLHRAKRGLGMRHAEVSMAN) the chain is on the cytoplasmic side. A helical transmembrane segment spans residues 159–179 (MVLIGFVSCISTLCIGAAAFS). The pore-forming intramembrane region spans 184 to 207 (WTFFQAYYYCFITLTTIGFGDYVA). The helical transmembrane segment at 223–243 (FSFVYILTGLTVIGAFLNLVV) threads the bilayer. Topologically, residues 244–411 (LRFMTMNAED…RGLMKRRSSV (168 aa)) are cytoplasmic.

Belongs to the two pore domain potassium channel (TC 1.A.1.8) family. In terms of assembly, homodimer. Heterodimer with KCNK1. Heterodimer with KCNK9. As to expression, strongest expression in heart. Moderate expression in lung and brain. Low levels in liver, kidney and skeletal muscle. Expressed in cerebellar granule cells (at protein level).

It is found in the cell membrane. The enzyme catalyses K(+)(in) = K(+)(out). It catalyses the reaction Na(+)(in) = Na(+)(out). Its activity is regulated as follows. Inhibited by extracellular acidification, muscarinic signaling, divalent metal cations Zn(2+) and Ba(2+), isoflurane, bupivacaine and phenytoin. Activated by protein kinase A. Ruthenium red resistant. K(+) channel that conducts voltage-dependent outward rectifying currents upon membrane depolarization. Voltage sensing is coupled to K(+) electrochemical gradient in an 'ion flux gating' mode where outward but not inward ion flow opens the gate. Changes ion selectivity and becomes permeable to Na(+) ions in response to extracellular acidification. Protonation of the pH sensor His-98 stabilizes C-type inactivation conformation likely converting the channel from outward K(+)-conducting, to inward Na(+)-conducting to nonconductive state. Homo- and heterodimerizes to form functional channels with distinct regulatory and gating properties. Allows K(+) currents with fast-gating kinetics important for the repolarization and hyperpolarization phases of action potentials. In cerebellar granule cells, heteromeric KCNK3:KCNK9 channel may hyperpolarize the resting membrane potential to limit intrinsic neuronal excitability, but once the action potential threshold is reached, it may support high-frequency action potential firing and increased neuronal excitability. Dispensable for central chemosensory respiration i.e. breathing controlled by brainstem CO2/pH, it rather conducts pH-sensitive currents and controls the firing rate of serotonergic raphe neurons involved in potentiation of the respiratory chemoreflex. Additionally, imparts chemosensitivity to type 1 cells in carotid bodies which respond to a decrease in arterial oxygen pressure or an increase in carbon dioxide pressure or pH to initiate adaptive changes in pulmonary ventilation. In adrenal gland, contributes to the maintenance of a hyperpolarized resting membrane potential of aldosterone-producing cells at zona glomerulosa and limits aldosterone release as part of a regulatory mechanism that controls arterial blood pressure and electrolyte homeostasis. In brown adipocytes, mediates K(+) efflux that counteracts norepinephrine-induced membrane depolarization, limits Ca(2+) efflux and downstream cAMP and PKA signaling, ultimately attenuating lipid oxidation and adaptive thermogenesis. This chain is Potassium channel subfamily K member 3, found in Rattus norvegicus (Rat).